Here is a 524-residue protein sequence, read N- to C-terminus: Minor capsid protein L2 (524 aa).

The short motif at 1–10 (MARARRTKRA) is the Nuclear localization signal element. A disulfide bridge links Cys-19 with Cys-25. The Nuclear localization signal motif lies at 516–523 (RKKRKRKY).

The protein belongs to the papillomaviridae L2 protein family. In terms of assembly, interacts with major capsid protein L1. Interacts with E2; this interaction inhibits E2 transcriptional activity but not the DNA replication function E2. Interacts with host GADD45GIP1. Interacts with host HSPA8; this interaction is required for L2 nuclear translocation. Interacts with host importins KPNB2 and KPNB3. Forms a complex with importin alpha2-beta1 heterodimers via interaction with the importin alpha2 adapter. Interacts with host DYNLT1; this interaction is essential for virus intracellular transport during entry. Interacts (via C-terminus) with host retromer subunits VPS35 and VPS29. Post-translationally, highly phosphorylated.

The protein resides in the virion. Its subcellular location is the host nucleus. The protein localises to the host early endosome. It localises to the host Golgi apparatus. Minor protein of the capsid that localizes along the inner surface of the virion, within the central cavities beneath the L1 pentamers. Plays a role in capsid stabilization through interaction with the major capsid protein L1. Once the virion enters the host cell, L2 escorts the genomic DNA into the nucleus by promoting escape from the endosomal compartments and traffic through the host Golgi network. Mechanistically, the C-terminus of L2 possesses a cell-penetrating peptide that protudes from the host endosome, interacts with host cytoplasmic retromer cargo and thereby mediates the capsid delivery to the host trans-Golgi network. Plays a role through its interaction with host dynein in the intracellular microtubule-dependent transport of viral capsid toward the nucleus. Mediates the viral genome import into the nucleus through binding to host importins. Once within the nucleus, L2 localizes viral genomes to host PML bodies in order to activate early gene expression for establishment of infection. Later on, promotes late gene expression by interacting with the viral E2 protein and by inhibiting its transcriptional activation functions. During virion assembly, encapsidates the genome by direct interaction with the viral DNA. The protein is Minor capsid protein L2 of Human papillomavirus 22.